Reading from the N-terminus, the 499-residue chain is Aspartyl/glutamyl-tRNA(Asn/Gln) amidotransferase subunit B (499 aa).

The protein belongs to the GatB/GatE family. GatB subfamily. In terms of assembly, heterotrimer of A, B and C subunits.

It carries out the reaction L-glutamyl-tRNA(Gln) + L-glutamine + ATP + H2O = L-glutaminyl-tRNA(Gln) + L-glutamate + ADP + phosphate + H(+). The catalysed reaction is L-aspartyl-tRNA(Asn) + L-glutamine + ATP + H2O = L-asparaginyl-tRNA(Asn) + L-glutamate + ADP + phosphate + 2 H(+). In terms of biological role, allows the formation of correctly charged Asn-tRNA(Asn) or Gln-tRNA(Gln) through the transamidation of misacylated Asp-tRNA(Asn) or Glu-tRNA(Gln) in organisms which lack either or both of asparaginyl-tRNA or glutaminyl-tRNA synthetases. The reaction takes place in the presence of glutamine and ATP through an activated phospho-Asp-tRNA(Asn) or phospho-Glu-tRNA(Gln). This Bartonella quintana (strain Toulouse) (Rochalimaea quintana) protein is Aspartyl/glutamyl-tRNA(Asn/Gln) amidotransferase subunit B.